Reading from the N-terminus, the 70-residue chain is Brevinin-1MT1 (70 aa).

An N-terminal signal peptide occupies residues 1 to 22 (MFTLKKSLLLLFFLGTINLSLC). Residues 23 to 44 (EQERDADEEERRDDDEMDVEVE) constitute a propeptide that is removed on maturation. An intrachain disulfide couples C64 to C70.

The protein belongs to the frog skin active peptide (FSAP) family. Brevinin subfamily. Expressed by the skin glands.

The protein localises to the secreted. Functionally, antimicrobial peptide with activity against a variety of Gram-negative and Gram-positive bacteria and against fungi. Shows strong hemolytic activity against human erythrocytes. The sequence is that of Brevinin-1MT1 from Amolops mantzorum (Sichuan torrent frog).